Here is a 371-residue protein sequence, read N- to C-terminus: Putative glutamate--cysteine ligase 2 (371 aa).

Belongs to the glutamate--cysteine ligase type 2 family. YbdK subfamily.

The catalysed reaction is L-cysteine + L-glutamate + ATP = gamma-L-glutamyl-L-cysteine + ADP + phosphate + H(+). Functionally, ATP-dependent carboxylate-amine ligase which exhibits weak glutamate--cysteine ligase activity. In Burkholderia mallei (strain NCTC 10247), this protein is Putative glutamate--cysteine ligase 2.